We begin with the raw amino-acid sequence, 140 residues long: Nucleoside diphosphate kinase (140 aa).

Residues Lys-11, Phe-59, Arg-87, Thr-93, Arg-104, and Asn-114 each contribute to the ATP site. The active-site Pros-phosphohistidine intermediate is His-117.

The protein belongs to the NDK family. As to quaternary structure, homotetramer. The cofactor is Mg(2+).

Its subcellular location is the cytoplasm. The enzyme catalyses a 2'-deoxyribonucleoside 5'-diphosphate + ATP = a 2'-deoxyribonucleoside 5'-triphosphate + ADP. It carries out the reaction a ribonucleoside 5'-diphosphate + ATP = a ribonucleoside 5'-triphosphate + ADP. Major role in the synthesis of nucleoside triphosphates other than ATP. The ATP gamma phosphate is transferred to the NDP beta phosphate via a ping-pong mechanism, using a phosphorylated active-site intermediate. This chain is Nucleoside diphosphate kinase, found in Azorhizobium caulinodans (strain ATCC 43989 / DSM 5975 / JCM 20966 / LMG 6465 / NBRC 14845 / NCIMB 13405 / ORS 571).